The chain runs to 482 residues: 7-deoxyloganetic acid glucosyl transferase (482 aa).

The Proton acceptor role is filled by His-22. His-22 contributes to the an anthocyanidin binding site. Asp-127 functions as the Charge relay in the catalytic mechanism. UDP-alpha-D-glucose contacts are provided by Thr-149, Ala-362, Gln-364, His-379, Trp-382, Asn-383, Ser-384, and Glu-387. An an anthocyanidin-binding site is contributed by Ala-402. 2 residues coordinate UDP-alpha-D-glucose: Asp-403 and Gln-404.

The protein belongs to the UDP-glycosyltransferase family. Expressed in the leaf internal phloem-associated parenchyma (IPAP) inside the mesophyll. Mostly observed in leaves, roots and stems, and, to a lower extent, in flowers.

The protein resides in the nucleus. It is found in the cytoplasm. It localises to the cytosol. It carries out the reaction 7-deoxyloganetate + UDP-alpha-D-glucose = 7-deoxyloganate + UDP + H(+). It functions in the pathway alkaloid biosynthesis. Component of the seco-iridoid and derivatives monoterpenoid indole alkaloids (MIAs, e.g. vincristine, quinine, and strychnine) biosynthesis pathway. Catalyzes the glucosylation of 7-deoxyloganetic acid to form 7-deoxyloganic acid using UDP-glucose as the sugar donor. Inactive with loganetic acid, loganetin, iridodial, iridotrial, 8-OH-geraniol, jasmonic acid, gibberellic acid, indole acetic acid, salicylic acid, abscisic acid, zeatin and luteolin. The protein is 7-deoxyloganetic acid glucosyl transferase of Catharanthus roseus (Madagascar periwinkle).